A 108-amino-acid polypeptide reads, in one-letter code: Nucleoid-associated protein Rmet_2128 (108 aa).

Residues 86–96 (TTQEKMGSMTS) are compositionally biased toward polar residues. The disordered stretch occupies residues 86–108 (TTQEKMGSMTSGLPLPPGFKLPF). The span at 99 to 108 (PLPPGFKLPF) shows a compositional bias: pro residues.

Belongs to the YbaB/EbfC family. Homodimer.

The protein resides in the cytoplasm. It is found in the nucleoid. Binds to DNA and alters its conformation. May be involved in regulation of gene expression, nucleoid organization and DNA protection. This chain is Nucleoid-associated protein Rmet_2128, found in Cupriavidus metallidurans (strain ATCC 43123 / DSM 2839 / NBRC 102507 / CH34) (Ralstonia metallidurans).